Consider the following 324-residue polypeptide: Quinolinate synthase (324 aa).

Iminosuccinate-binding residues include histidine 39 and serine 56. Cysteine 101 serves as a coordination point for [4Fe-4S] cluster. Iminosuccinate is bound by residues 127–129 (YIN) and serine 144. Cysteine 187 lines the [4Fe-4S] cluster pocket. Iminosuccinate contacts are provided by residues 213-215 (HPE) and threonine 230. Cysteine 280 serves as a coordination point for [4Fe-4S] cluster.

This sequence belongs to the quinolinate synthase family. Type 2 subfamily. The cofactor is [4Fe-4S] cluster.

The protein localises to the cytoplasm. The catalysed reaction is iminosuccinate + dihydroxyacetone phosphate = quinolinate + phosphate + 2 H2O + H(+). Its pathway is cofactor biosynthesis; NAD(+) biosynthesis; quinolinate from iminoaspartate: step 1/1. Catalyzes the condensation of iminoaspartate with dihydroxyacetone phosphate to form quinolinate. This Nostoc punctiforme (strain ATCC 29133 / PCC 73102) protein is Quinolinate synthase.